Here is a 178-residue protein sequence, read N- to C-terminus: Nicotinamide-nucleotide adenylyltransferase (178 aa).

Belongs to the archaeal NMN adenylyltransferase family.

It localises to the cytoplasm. The catalysed reaction is beta-nicotinamide D-ribonucleotide + ATP + H(+) = diphosphate + NAD(+). It participates in cofactor biosynthesis; NAD(+) biosynthesis; NAD(+) from nicotinamide D-ribonucleotide: step 1/1. In Thermoplasma volcanium (strain ATCC 51530 / DSM 4299 / JCM 9571 / NBRC 15438 / GSS1), this protein is Nicotinamide-nucleotide adenylyltransferase.